Consider the following 878-residue polypeptide: Alanine--tRNA ligase (878 aa).

Residues histidine 567, histidine 571, cysteine 669, and histidine 673 each coordinate Zn(2+).

Belongs to the class-II aminoacyl-tRNA synthetase family. It depends on Zn(2+) as a cofactor.

The protein localises to the cytoplasm. It carries out the reaction tRNA(Ala) + L-alanine + ATP = L-alanyl-tRNA(Ala) + AMP + diphosphate. Catalyzes the attachment of alanine to tRNA(Ala) in a two-step reaction: alanine is first activated by ATP to form Ala-AMP and then transferred to the acceptor end of tRNA(Ala). Also edits incorrectly charged Ser-tRNA(Ala) and Gly-tRNA(Ala) via its editing domain. The polypeptide is Alanine--tRNA ligase (Rickettsia canadensis (strain McKiel)).